A 401-amino-acid polypeptide reads, in one-letter code: Nicotinamide/nicotinic acid mononucleotide adenylyltransferase 1 (401 aa).

Disordered stretches follow at residues 1-30 and 48-123; these read MDPT…KIPK and APFN…RGVQ. Basic residues predominate over residues 52-69; it reads IKRKKKHPKHHHHHHHSR. Ser91, Ser95, Ser96, and Ser111 each carry phosphoserine. Residues Ser173 and Phe174 each contribute to the NAD(+) site. His181 contributes to the ATP binding site. Residues Thr253, Gly288, Asp290, Trp301, Arg320, and Asn351 each contribute to the NAD(+) site. Residue 356 to 359 coordinates ATP; sequence TKVR.

This sequence belongs to the eukaryotic NMN adenylyltransferase family. Homotetramer. The cofactor is Ni(2+).

It is found in the cytoplasm. It localises to the nucleus. It catalyses the reaction beta-nicotinamide D-ribonucleotide + ATP + H(+) = diphosphate + NAD(+). The enzyme catalyses nicotinate beta-D-ribonucleotide + ATP + H(+) = deamido-NAD(+) + diphosphate. It participates in cofactor biosynthesis; NAD(+) biosynthesis; deamido-NAD(+) from nicotinate D-ribonucleotide: step 1/1. The protein operates within cofactor biosynthesis; NAD(+) biosynthesis; NAD(+) from nicotinamide D-ribonucleotide: step 1/1. In terms of biological role, catalyzes the formation of NAD(+) from nicotinamide mononucleotide (NMN) and ATP. Can also use the deamidated form; nicotinic acid mononucleotide (NaMN) as substrate to form deamido-NAD(+) (NaAD). Key enzyme in both de novo and salvage pathways for NAD(+) biosynthesis. Predominantly acts in the salvage pathways via NMN. This chain is Nicotinamide/nicotinic acid mononucleotide adenylyltransferase 1, found in Saccharomyces cerevisiae (strain ATCC 204508 / S288c) (Baker's yeast).